The primary structure comprises 279 residues: NADPH-dependent 7-cyano-7-deazaguanine reductase (279 aa).

Position 86-88 (86-88 (IES)) interacts with substrate. 88–89 (SK) contributes to the NADPH binding site. C187 serves as the catalytic Thioimide intermediate. D194 (proton donor) is an active-site residue. 226 to 227 (HE) lines the substrate pocket. 255–256 (RG) provides a ligand contact to NADPH.

The protein belongs to the GTP cyclohydrolase I family. QueF type 2 subfamily. Homodimer.

It localises to the cytoplasm. It catalyses the reaction 7-aminomethyl-7-carbaguanine + 2 NADP(+) = 7-cyano-7-deazaguanine + 2 NADPH + 3 H(+). The protein operates within tRNA modification; tRNA-queuosine biosynthesis. In terms of biological role, catalyzes the NADPH-dependent reduction of 7-cyano-7-deazaguanine (preQ0) to 7-aminomethyl-7-deazaguanine (preQ1). This is NADPH-dependent 7-cyano-7-deazaguanine reductase from Actinobacillus pleuropneumoniae serotype 5b (strain L20).